The chain runs to 198 residues: HTH-type transcriptional regulator BetI (198 aa).

The region spanning 8-68 (PLRRRELIDA…ATMRHLLREL (61 aa)) is the HTH tetR-type domain. Residues 31–50 (TVAQIAHEAGVSPALAHHYF) constitute a DNA-binding region (H-T-H motif).

It functions in the pathway amine and polyamine biosynthesis; betaine biosynthesis via choline pathway [regulation]. Its function is as follows. Repressor involved in the biosynthesis of the osmoprotectant glycine betaine. It represses transcription of the choline transporter BetT and the genes of BetAB involved in the synthesis of glycine betaine. This is HTH-type transcriptional regulator BetI from Brucella canis (strain ATCC 23365 / NCTC 10854 / RM-666).